Reading from the N-terminus, the 657-residue chain is Major core protein 4b (657 aa).

Positions 1-61 are excised as a propeptide; that stretch reads MESDSNIAIE…ITEEDVISAG (61 aa).

This sequence belongs to the poxviridae protein P4b family. The precursor is cleaved to a mature protein during virion maturation. Proteolytic cleavage of major core proteins P4a (A10L), P4b (A3L), and VP8 (L4R), which occurs at a late stage of core formation, is required for production of infectious mature virions (MV).

The protein resides in the virion. Major component of the virion core that undergoes proteolytic processing during the immature virion (IV) to mature virion (MV) transition. Essential for the formation of a structurally normal core. The polypeptide is Major core protein 4b (Vertebrata (FPV)).